Here is an 88-residue protein sequence, read N- to C-terminus: MKTVLIALLRFYKVAVSPMLGNRCRFYPSCSDYAREAIQYHGAARGTYLAVRRVCRCHPFSAGGIDLVPPPNSDTRARGEADARSHRL.

The segment at 68–88 (VPPPNSDTRARGEADARSHRL) is disordered. Residues 75-88 (TRARGEADARSHRL) show a composition bias toward basic and acidic residues.

This sequence belongs to the UPF0161 family.

The protein resides in the cell inner membrane. Its function is as follows. Could be involved in insertion of integral membrane proteins into the membrane. The polypeptide is Putative membrane protein insertion efficiency factor (Burkholderia cenocepacia (strain ATCC BAA-245 / DSM 16553 / LMG 16656 / NCTC 13227 / J2315 / CF5610) (Burkholderia cepacia (strain J2315))).